We begin with the raw amino-acid sequence, 460 residues long: Ammonium transporter Rh type B-B (460 aa).

Residues 1-10 (MTSYSTNMRI) lie on the Cytoplasmic side of the membrane. A helical membrane pass occupies residues 11–31 (KLPLFCLLLQFITIILFAVFV). At 32–62 (RYDHESDARGWHEELNNHSSSNADNDFYYRY) the chain is on the extracellular side. Asn48 carries an N-linked (GlcNAc...) asparagine glycan. The helical transmembrane segment at 63–83 (PSFQDVHVMIFIGFGFLMTFL) threads the bilayer. Residues 84–87 (KRYG) are Cytoplasmic-facing. Residues 88–108 (FSSVAFNFLIAAFGLQWSTLI) form a helical membrane-spanning segment. At 109–125 (QGFFHGFHDGKIHVGIE) the chain is on the extracellular side. Residues 126–146 (SMINADFCTGAVLISFGAVLG) traverse the membrane as a helical segment. Residues 147–150 (KTSP) are Cytoplasmic-facing. The helical transmembrane segment at 151 to 171 (VQLIIMTLVEVTLFGINEYII) threads the bilayer. At 172–179 (LNIVGAKD) the chain is on the extracellular side. A helical transmembrane segment spans residues 180-202 (AGGSMTIHTFGAYFGLIVSRVLY). At 203 to 220 (REDLEKSRQREGSVYHSD) the chain is on the cytoplasmic side. Residues 221–241 (LFAMIGTIYLWMFWPSFNSAV) form a helical membrane-spanning segment. Residues 242 to 252 (TAHGDDQHRTV) are Extracellular-facing. Residues 253-273 (MNTYYSLAACTLATFGFSALL) traverse the membrane as a helical segment. At 274–283 (NGEGKLDMVH) the chain is on the cytoplasmic side. A helical membrane pass occupies residues 284 to 304 (IQNAALAGGVAVGTSGEMMLT). Residue Pro305 is a topological domain, extracellular. A helical membrane pass occupies residues 306 to 326 (FGAMIAGTLAGMISVLGYKYL). Over 327 to 347 (TPVLDSKLKIQDTCGVHNLHG) the chain is Cytoplasmic. The chain crosses the membrane as a helical span at residues 348-368 (MPGILGAIIGAIVALFATADI). The Extracellular portion of the chain corresponds to 369-394 (YGDGMGDVFPLISDGSRTAKQQSLYQ). A helical membrane pass occupies residues 395–415 (FLALLVALGFAIIGGTVVGFI). Topologically, residues 416–460 (LKLPIFGTPSDAECFEDAIYWEVPGGEGHQQLTVVINNEDPDTQA) are cytoplasmic.

It belongs to the ammonium transporter (TC 2.A.49) family. Rh subfamily.

The protein resides in the basolateral cell membrane. Its subcellular location is the cytoplasmic vesicle membrane. In terms of biological role, functions as a specific ammonium transporter. This Xenopus laevis (African clawed frog) protein is Ammonium transporter Rh type B-B (rhbg-b).